A 335-amino-acid polypeptide reads, in one-letter code: Trans-1,2-dihydrobenzene-1,2-diol dehydrogenase (335 aa).

Belongs to the Gfo/Idh/MocA family. Homodimer. Liver, lens, spleen, kidney and small intestine.

It catalyses the reaction (1R,2R)-1,2-dihydrobenzene-1,2-diol + NADP(+) = catechol + NADPH + H(+). The catalysed reaction is D-xylose + NADP(+) = D-xylono-1,5-lactone + NADPH + H(+). With respect to regulation, strongly inhibited by isoascorbic acid, 4-hydroxyacetophenone and chloromercuriphenylsulphonate. Stimulated by various salts. This chain is Trans-1,2-dihydrobenzene-1,2-diol dehydrogenase (DHDH), found in Sus scrofa (Pig).